Reading from the N-terminus, the 333-residue chain is PDZ domain-containing protein GIPC1 (333 aa).

Residues 1–11 (MPLGLGRRKKA) show a composition bias toward basic residues. A disordered region spans residues 1 to 55 (MPLGLGRRKKAPPLVENEEAEPSRSGLGVGEPGPLGGSGAGESQMGLPPPPASLR). The span at 27-40 (LGVGEPGPLGGSGA) shows a compositional bias: gly residues. S68 bears the Phosphoserine mark. Residues 133-213 (EVEVFKSEDA…GRTFTLKLTE (81 aa)) enclose the PDZ domain. The segment at 221–244 (ISQRSSGGHPGSGPQLGTGRGTLR) is disordered. S222, S225, and S232 each carry phosphoserine. Residues 228–240 (GHPGSGPQLGTGR) are compositionally biased toward gly residues. Phosphothreonine is present on T242. A Phosphoserine modification is found at S247.

Belongs to the GIPC family. As to quaternary structure, interacts with SDC4/syndecan-4 and SEMA4C/semaphorin-4C. Interacts with RGS19 (C-terminus), GLUT1 (C-terminus), ACTN1, KIF1B, MYO6 and PLEKHG5. As to expression, widely expressed.

The protein localises to the cytoplasm. It is found in the membrane. Functionally, may be involved in G protein-linked signaling. The chain is PDZ domain-containing protein GIPC1 (Gipc1) from Rattus norvegicus (Rat).